A 595-amino-acid chain; its full sequence is Aspartate--tRNA(Asp/Asn) ligase (595 aa).

Glu-175 is an L-aspartate binding site. The aspartate stretch occupies residues 199–202 (QQYK). Residues Arg-221 and His-454 each contribute to the L-aspartate site. 221-223 (RDE) provides a ligand contact to ATP. Glu-488 contacts ATP. Arg-495 lines the L-aspartate pocket. 540–543 (GIDR) is a binding site for ATP.

It belongs to the class-II aminoacyl-tRNA synthetase family. Type 1 subfamily. As to quaternary structure, homodimer.

The protein resides in the cytoplasm. The enzyme catalyses tRNA(Asx) + L-aspartate + ATP = L-aspartyl-tRNA(Asx) + AMP + diphosphate. Its function is as follows. Aspartyl-tRNA synthetase with relaxed tRNA specificity since it is able to aspartylate not only its cognate tRNA(Asp) but also tRNA(Asn). Reaction proceeds in two steps: L-aspartate is first activated by ATP to form Asp-AMP and then transferred to the acceptor end of tRNA(Asp/Asn). The chain is Aspartate--tRNA(Asp/Asn) ligase from Sinorhizobium fredii (strain NBRC 101917 / NGR234).